A 274-amino-acid chain; its full sequence is tRNA-cytidine(32) 2-sulfurtransferase (274 aa).

Residues 40–45 carry the PP-loop motif motif; that stretch reads SGGKDS. 3 residues coordinate [4Fe-4S] cluster: Cys-115, Cys-118, and Cys-206.

The protein belongs to the TtcA family. Homodimer. Mg(2+) is required as a cofactor. [4Fe-4S] cluster serves as cofactor.

It is found in the cytoplasm. The enzyme catalyses cytidine(32) in tRNA + S-sulfanyl-L-cysteinyl-[cysteine desulfurase] + AH2 + ATP = 2-thiocytidine(32) in tRNA + L-cysteinyl-[cysteine desulfurase] + A + AMP + diphosphate + H(+). The protein operates within tRNA modification. In terms of biological role, catalyzes the ATP-dependent 2-thiolation of cytidine in position 32 of tRNA, to form 2-thiocytidine (s(2)C32). The sulfur atoms are provided by the cysteine/cysteine desulfurase (IscS) system. This chain is tRNA-cytidine(32) 2-sulfurtransferase, found in Pseudomonas putida (strain ATCC 47054 / DSM 6125 / CFBP 8728 / NCIMB 11950 / KT2440).